Reading from the N-terminus, the 389-residue chain is Ankyrin repeat domain-containing protein 42 (389 aa).

The segment at 1–21 is disordered; the sequence is MPGVANSGPSTSSRETANPCS. Residues 7–19 are compositionally biased toward polar residues; it reads SGPSTSSRETANP. ANK repeat units lie at residues 25-60, 64-93, 97-126, 130-159, 163-192, 200-232, 235-265, 269-298, and 302-332; these read VHFG…DITH, RGWT…NLTA, RGCT…DPSV, REWR…SIED, NGNL…SATQ, NGEN…DLED, TLAF…NINE, NGST…DSNI, and AGER…DIDD.

The polypeptide is Ankyrin repeat domain-containing protein 42 (ANKRD42) (Homo sapiens (Human)).